Consider the following 458-residue polypeptide: Transcription factor verZ (458 aa).

A DNA-binding region (zn(2)-C6 fungal-type) is located at residues 117–144 (CDRCQAAKVKCGHEKPSCRRCTYHKVEC). 2 disordered regions span residues 153–256 (GRPR…MQSM) and 435–458 (MEEEDDPCSEIKLNPNRLRLEDGK). 3 stretches are compositionally biased toward polar residues: residues 167 to 186 (PSPQGSINGASDENSRSKSA), 193 to 207 (FTGTEPITEARQSPV), and 223 to 235 (RAEPWTPSLTTNF).

The protein localises to the nucleus. Transcription factor; part of the gene cluster that mediates the biosynthesis of 11'-deoxyverticillin A, one of the dimeric epipolythiodioxopiperazines (ETPs) from the verticillin family that act as mycotoxins. 11'-deoxyverticillin A is required for normal conidiation. Directly binds the consensus motif 5'-(T/C)(C/A)(G/T)GN3CC(G/T)(A/G)(G/C)-3' localized in the upstream regions of the verticillin biosynthetic genes. In Clonostachys rogersoniana, this protein is Transcription factor verZ.